Reading from the N-terminus, the 916-residue chain is Protein translocase subunit SecA (916 aa).

ATP is bound by residues Gln87, Gly105–Thr109, and Asp507. Residues Cys900, Cys902, Cys911, and His912 each contribute to the Zn(2+) site.

It belongs to the SecA family. As to quaternary structure, monomer and homodimer. Part of the essential Sec protein translocation apparatus which comprises SecA, SecYEG and auxiliary proteins SecDF-YajC and YidC. Zn(2+) serves as cofactor.

The protein localises to the cell inner membrane. Its subcellular location is the cytoplasm. The enzyme catalyses ATP + H2O + cellular proteinSide 1 = ADP + phosphate + cellular proteinSide 2.. Part of the Sec protein translocase complex. Interacts with the SecYEG preprotein conducting channel. Has a central role in coupling the hydrolysis of ATP to the transfer of proteins into and across the cell membrane, serving both as a receptor for the preprotein-SecB complex and as an ATP-driven molecular motor driving the stepwise translocation of polypeptide chains across the membrane. The sequence is that of Protein translocase subunit SecA from Neisseria meningitidis serogroup C (strain 053442).